We begin with the raw amino-acid sequence, 369 residues long: S-(hydroxymethyl)glutathione dehydrogenase (369 aa).

The Zn(2+) site is built by cysteine 40, histidine 62, cysteine 92, cysteine 95, cysteine 98, cysteine 106, and cysteine 169.

Belongs to the zinc-containing alcohol dehydrogenase family. Class-III subfamily. As to quaternary structure, homodimer. Zn(2+) serves as cofactor.

It localises to the cytoplasm. The catalysed reaction is S-(hydroxymethyl)glutathione + NADP(+) = S-formylglutathione + NADPH + H(+). It carries out the reaction S-(hydroxymethyl)glutathione + NAD(+) = S-formylglutathione + NADH + H(+). The enzyme catalyses a primary alcohol + NAD(+) = an aldehyde + NADH + H(+). It catalyses the reaction a secondary alcohol + NAD(+) = a ketone + NADH + H(+). The catalysed reaction is S-nitrosoglutathione + NADH + H(+) = S-(hydroxysulfenamide)glutathione + NAD(+). Its function is as follows. Has high formaldehyde dehydrogenase activity in the presence of glutathione and catalyzes the oxidation of normal alcohols in a reaction that is not GSH-dependent. In addition, hemithiolacetals other than those formed from GSH, including omega-thiol fatty acids, also are substrates. Also acts as a S-nitroso-glutathione reductase by catalyzing the NADH-dependent reduction of S-nitrosoglutathione. In Escherichia coli O1:K1 / APEC, this protein is S-(hydroxymethyl)glutathione dehydrogenase (frmA).